Consider the following 176-residue polypeptide: Ubiquinol-cytochrome c reductase iron-sulfur subunit (176 aa).

The chain crosses the membrane as a helical span at residues 15-36 (FLFVATGAAAAVGGAAALWPFI). Positions 87–174 (ARAVNVASLP…YQFVSDTKIQ (88 aa)) constitute a Rieske domain. Positions 119, 121, 138, and 141 each coordinate [2Fe-2S] cluster. An intrachain disulfide couples cysteine 124 to cysteine 140.

The protein belongs to the Rieske iron-sulfur protein family. As to quaternary structure, the main subunits of complex b-c1 are: cytochrome b, cytochrome c1 and the Rieske protein. It depends on [2Fe-2S] cluster as a cofactor.

It localises to the cell membrane. It carries out the reaction a quinol + 2 Fe(III)-[cytochrome c](out) = a quinone + 2 Fe(II)-[cytochrome c](out) + 2 H(+)(out). In terms of biological role, component of the ubiquinol-cytochrome c reductase complex (complex III or cytochrome b-c1 complex), which is a respiratory chain that generates an electrochemical potential coupled to ATP synthesis. The sequence is that of Ubiquinol-cytochrome c reductase iron-sulfur subunit (petA) from Bradyrhizobium diazoefficiens (strain JCM 10833 / BCRC 13528 / IAM 13628 / NBRC 14792 / USDA 110).